The chain runs to 603 residues: Proline--tRNA ligase (603 aa).

It belongs to the class-II aminoacyl-tRNA synthetase family. ProS type 1 subfamily. As to quaternary structure, homodimer.

It is found in the cytoplasm. It catalyses the reaction tRNA(Pro) + L-proline + ATP = L-prolyl-tRNA(Pro) + AMP + diphosphate. Catalyzes the attachment of proline to tRNA(Pro) in a two-step reaction: proline is first activated by ATP to form Pro-AMP and then transferred to the acceptor end of tRNA(Pro). As ProRS can inadvertently accommodate and process non-cognate amino acids such as alanine and cysteine, to avoid such errors it has two additional distinct editing activities against alanine. One activity is designated as 'pretransfer' editing and involves the tRNA(Pro)-independent hydrolysis of activated Ala-AMP. The other activity is designated 'posttransfer' editing and involves deacylation of mischarged Ala-tRNA(Pro). The misacylated Cys-tRNA(Pro) is not edited by ProRS. The chain is Proline--tRNA ligase from Arthrobacter sp. (strain FB24).